We begin with the raw amino-acid sequence, 132 residues long: Large ribosomal subunit protein bL19 (132 aa).

Belongs to the bacterial ribosomal protein bL19 family.

This protein is located at the 30S-50S ribosomal subunit interface and may play a role in the structure and function of the aminoacyl-tRNA binding site. The chain is Large ribosomal subunit protein bL19 from Maricaulis maris (strain MCS10) (Caulobacter maris).